The primary structure comprises 138 residues: Mu-like prophage FluMu G protein 2 (138 aa).

It to phage Mu protein G.

The protein is Mu-like prophage FluMu G protein 2 of Haemophilus influenzae (strain ATCC 51907 / DSM 11121 / KW20 / Rd).